Reading from the N-terminus, the 227-residue chain is MTQGNQKTEGNPPEQVTVTDKRRIDPETGEVRHVPPGDTPGGTAPQAATAESGGAATDKVAELTADLQRVQADFANYRKRALRDQQAAADRAKAAVVNQLLGVLDDLERARKHGDLESGPLKSVADKLESALTGLGLTAFGEEGEEFDPVLHEAVQHEGDGSKPVIGTVMRQGYKLGDQVLRHALVGVVDTVTEEGDGEAAATDEPTAAAAETRPPESDDNAGASGD.

Residues 1–18 (MTQGNQKTEGNPPEQVTV) are compositionally biased toward polar residues. Disordered regions lie at residues 1 to 57 (MTQG…GAAT) and 193 to 227 (TEEG…ASGD). A compositionally biased stretch (basic and acidic residues) spans 19 to 35 (TDKRRIDPETGEVRHVP). Low complexity-rich tracts occupy residues 41–50 (GGTAPQAATA) and 199–213 (EAAA…AAET).

This sequence belongs to the GrpE family. Homodimer.

It localises to the cytoplasm. Its function is as follows. Participates actively in the response to hyperosmotic and heat shock by preventing the aggregation of stress-denatured proteins, in association with DnaK and GrpE. It is the nucleotide exchange factor for DnaK and may function as a thermosensor. Unfolded proteins bind initially to DnaJ; upon interaction with the DnaJ-bound protein, DnaK hydrolyzes its bound ATP, resulting in the formation of a stable complex. GrpE releases ADP from DnaK; ATP binding to DnaK triggers the release of the substrate protein, thus completing the reaction cycle. Several rounds of ATP-dependent interactions between DnaJ, DnaK and GrpE are required for fully efficient folding. This chain is Protein GrpE, found in Mycolicibacterium paratuberculosis (strain ATCC BAA-968 / K-10) (Mycobacterium paratuberculosis).